Reading from the N-terminus, the 84-residue chain is NAD(P)H-quinone oxidoreductase subunit O (84 aa).

Belongs to the complex I NdhO subunit family. In terms of assembly, NDH-1 can be composed of about 15 different subunits; different subcomplexes with different compositions have been identified which probably have different functions.

The protein localises to the cellular thylakoid membrane. The catalysed reaction is a plastoquinone + NADH + (n+1) H(+)(in) = a plastoquinol + NAD(+) + n H(+)(out). The enzyme catalyses a plastoquinone + NADPH + (n+1) H(+)(in) = a plastoquinol + NADP(+) + n H(+)(out). In terms of biological role, NDH-1 shuttles electrons from an unknown electron donor, via FMN and iron-sulfur (Fe-S) centers, to quinones in the respiratory and/or the photosynthetic chain. The immediate electron acceptor for the enzyme in this species is believed to be plastoquinone. Couples the redox reaction to proton translocation, and thus conserves the redox energy in a proton gradient. Cyanobacterial NDH-1 also plays a role in inorganic carbon-concentration. The protein is NAD(P)H-quinone oxidoreductase subunit O of Synechococcus sp. (strain CC9902).